The primary structure comprises 64 residues: MPKMKTNKGAAKRFKKTAGGIKYKHATKRHILTKRTTKNKRQLRPNSILPKCEVAGVMRMLPYA.

This sequence belongs to the bacterial ribosomal protein bL35 family.

In Vibrio metschnikovii, this protein is Large ribosomal subunit protein bL35.